Reading from the N-terminus, the 488-residue chain is Glutamyl-tRNA(Gln) amidotransferase subunit A (488 aa).

Active-site charge relay system residues include Lys77 and Ser152. Catalysis depends on Ser176, which acts as the Acyl-ester intermediate.

It belongs to the amidase family. GatA subfamily. In terms of assembly, heterotrimer of A, B and C subunits.

The enzyme catalyses L-glutamyl-tRNA(Gln) + L-glutamine + ATP + H2O = L-glutaminyl-tRNA(Gln) + L-glutamate + ADP + phosphate + H(+). Its function is as follows. Allows the formation of correctly charged Gln-tRNA(Gln) through the transamidation of misacylated Glu-tRNA(Gln) in organisms which lack glutaminyl-tRNA synthetase. The reaction takes place in the presence of glutamine and ATP through an activated gamma-phospho-Glu-tRNA(Gln). This Streptococcus pneumoniae serotype 19F (strain G54) protein is Glutamyl-tRNA(Gln) amidotransferase subunit A.